Consider the following 173-residue polypeptide: Mitochondrial holo-[acyl-carrier-protein] synthase (173 aa).

Belongs to the P-Pant transferase superfamily. AcpS family.

It localises to the mitochondrion. The catalysed reaction is apo-[ACP] + CoA = holo-[ACP] + adenosine 3',5'-bisphosphate + H(+). Functionally, transfers the 4'-phosphopantetheine moiety from coenzyme A to a Ser of mitochondrial acyl-carrier-protein. This chain is Mitochondrial holo-[acyl-carrier-protein] synthase (PPT2), found in Saccharomyces cerevisiae (strain ATCC 204508 / S288c) (Baker's yeast).